The following is a 101-amino-acid chain: Antiviral protein CAP (101 aa).

Functionally, has antiviral activity against tobacco mosaic virus and antitumor activity. The protein is Antiviral protein CAP of Coprinus comatus (Shaggy mane).